The sequence spans 31 residues: Photosystem I reaction center subunit XII (31 aa).

The chain crosses the membrane as a helical span at residues 7–26 (QVFLALIIALIPGILADRLG).

This sequence belongs to the PsaM family.

It localises to the plastid. The protein localises to the chloroplast thylakoid membrane. In Euglena deses, this protein is Photosystem I reaction center subunit XII.